The chain runs to 580 residues: Protein O-linked-mannose beta-1,4-N-acetylglucosaminyltransferase 2 (580 aa).

Residues 1–4 (MHLS) lie on the Cytoplasmic side of the membrane. Residues 5–25 (AVFNALLVSVLAAVLWKHVRL) traverse the membrane as a helical; Signal-anchor for type II membrane protein segment. Residues 26–580 (REHAATLEEE…PFADVLVCNT (555 aa)) are Lumenal-facing. Asn-99 and Asn-276 each carry an N-linked (GlcNAc...) asparagine glycan. The Fibronectin type-III domain occupies 488–580 (ARCQASVHGA…PFADVLVCNT (93 aa)).

The protein belongs to the glycosyltransferase 61 family. As to expression, highly expressed in the brain, muscle, heart, and kidney in both fetus and adult. In the brain, highest expression in the cortex and cerebellum. Highly expressed in the pancreas.

The protein localises to the endoplasmic reticulum membrane. It carries out the reaction 3-O-(alpha-D-mannosyl)-L-threonyl-[protein] + UDP-N-acetyl-alpha-D-glucosamine = 3-O-(N-acetyl-beta-D-glucosaminyl-(1-&gt;4)-alpha-D-mannosyl)-L-threonyl-[protein] + UDP + H(+). Its pathway is protein modification; protein glycosylation. Its function is as follows. O-linked mannose beta-1,4-N-acetylglucosaminyltransferase that transfers UDP-N-acetyl-D-glucosamine to the 4-position of the mannose to generate N-acetyl-D-glucosamine-beta-1,4-O-D-mannosylprotein. Involved in the biosynthesis of the phosphorylated O-mannosyl trisaccharide (N-acetylgalactosamine-beta-3-N-acetylglucosamine-beta-4-(phosphate-6-)mannose), a carbohydrate structure present in alpha-dystroglycan (DAG1), which is required for binding laminin G-like domain-containing extracellular proteins with high affinity. The polypeptide is Protein O-linked-mannose beta-1,4-N-acetylglucosaminyltransferase 2 (POMGNT2) (Homo sapiens (Human)).